The sequence spans 457 residues: RNA-binding suppressor of PAS kinase protein 1 (457 aa).

The region spanning Arg-26–Asn-88 is the R3H domain. Disordered regions lie at residues Ile-142 to Glu-181, Leu-195 to Tyr-291, and Phe-406 to Ile-457. Residues Asn-145–Asn-158 are compositionally biased toward polar residues. The segment covering Lys-159–Glu-181 has biased composition (basic and acidic residues). Ser-198 is modified (phosphoserine). The segment covering Ser-226 to Thr-247 has biased composition (low complexity). Residues Ile-248 to Tyr-258 show a composition bias toward polar residues. Over residues Lys-418–Ser-435 the composition is skewed to basic and acidic residues. A phosphoserine mark is found at Ser-435, Ser-439, and Ser-447. Residues Arg-443–Ile-457 show a composition bias toward basic and acidic residues.

Its subcellular location is the cytoplasm. In Saccharomyces cerevisiae (strain ATCC 204508 / S288c) (Baker's yeast), this protein is RNA-binding suppressor of PAS kinase protein 1 (RBS1).